The following is a 68-amino-acid chain: Large ribosomal subunit protein uL29 (68 aa).

The protein belongs to the universal ribosomal protein uL29 family.

This is Large ribosomal subunit protein uL29 from Streptococcus suis (strain 98HAH33).